Reading from the N-terminus, the 286-residue chain is MAAYYRWKSFEENEDRPEKPRRYGVTEMRGPHYSVLSQNLLQEIFESMGQFVDGLKFSGGSNSLIPKSFIKQAIEMAHEHGVYVSTGDWAEHMLRSGPSAFKDYVEECKQLGFDTIELNANLLEVPEETLLRYVRLIKNGGLRAKPMFAVKFNKSDIPGRNRAFGSYVVPEPRSSEFVEDIDLLIRKAERCLEAGADTIMIDADDVCKYADSLRADIIAKVIGRLGIEKTMFEASDAKLVEWFIKRYGPNVNLYVDHSQIMDLECLRGRHLGKDHQSVLSSSYFLF.

The protein belongs to the phosphosulfolactate synthase family.

Functionally, transactivator required, together with HSP101, for long-term acquired thermotolerance (LAT) maintenance, probably by regulating heat-inducible genes expression, thus being a cellular component of thermomemory. This Arabidopsis thaliana (Mouse-ear cress) protein is Protein HEAT-STRESS-ASSOCIATED 32.